Reading from the N-terminus, the 292-residue chain is AhcY transcriptional activator HvrB (292 aa).

The HTH lysR-type domain occupies proline 10–threonine 67. A DNA-binding region (H-T-H motif) is located at residues phenylalanine 27–arginine 46.

This sequence belongs to the LysR transcriptional regulatory family.

Functions as a low-light activator of ahcY expression (gene for S-adenosyl-L-homocysteine hydrolase) and as a high-light activator of an uncharacterized 21.6 kDa protein in the ahcY-hvrB intergenic region (orf5). It is also a negative regulator of its own expression. The protein is AhcY transcriptional activator HvrB (hvrB) of Rhodobacter capsulatus (strain ATCC BAA-309 / NBRC 16581 / SB1003).